Reading from the N-terminus, the 334-residue chain is ATP-dependent kinase YFH7 (334 aa).

Position 30–38 (G30–T38) interacts with ATP.

Belongs to the YFH7 family.

Functionally, ATP-dependent kinase that could be involved in endoplasmic reticulum membrane assembly. This is ATP-dependent kinase YFH7 (YFH7) from Eremothecium gossypii (strain ATCC 10895 / CBS 109.51 / FGSC 9923 / NRRL Y-1056) (Yeast).